A 419-amino-acid chain; its full sequence is 3-isopropylmalate dehydratase large subunit (419 aa).

Residues C301, C361, and C364 each coordinate [4Fe-4S] cluster.

The protein belongs to the aconitase/IPM isomerase family. LeuC type 2 subfamily. In terms of assembly, heterodimer of LeuC and LeuD. Requires [4Fe-4S] cluster as cofactor.

It catalyses the reaction (2R,3S)-3-isopropylmalate = (2S)-2-isopropylmalate. It participates in amino-acid biosynthesis; L-leucine biosynthesis; L-leucine from 3-methyl-2-oxobutanoate: step 2/4. In terms of biological role, catalyzes the isomerization between 2-isopropylmalate and 3-isopropylmalate, via the formation of 2-isopropylmaleate. This chain is 3-isopropylmalate dehydratase large subunit, found in Campylobacter hominis (strain ATCC BAA-381 / DSM 21671 / CCUG 45161 / LMG 19568 / NCTC 13146 / CH001A).